The primary structure comprises 584 residues: Tyrosine-protein kinase Dnt (584 aa).

The signal sequence occupies residues 1-40 (MESVNKCGKSASTRNCTVKMSRKMWVLSLLALAALQLHSG). Residues 41-208 (SEVAAHLNVF…LETVMLPPTG (168 aa)) lie on the Extracellular side of the membrane. Residues 49–180 (VFLNPVEVMR…HLVFRRKKIC (132 aa)) form the WIF domain. N-linked (GlcNAc...) asparagine glycosylation is found at Asn124, Asn163, Asn168, and Asn183. The helical transmembrane segment at 209–229 (LITLVVGVSVAMGSVCLLLMI) threads the bilayer. The Cytoplasmic segment spans residues 230 to 584 (AYCVKGAANK…EFYSQITRYV (355 aa)). The interval 241-261 (QHHQHGGQPMRTSSFQRLNTH) is disordered. The span at 250–261 (MRTSSFQRLNTH) shows a compositional bias: polar residues. One can recognise a Protein kinase domain in the interval 317–577 (VRLSSLLQEG…QLQSCLSEFY (261 aa)). Residues 323 to 331 (LQEGTFGRV) and Lys345 each bind ATP. The active-site Proton acceptor is Asp442. Phosphotyrosine; by autocatalysis is present on Tyr472.

It belongs to the protein kinase superfamily. Tyr protein kinase family. In terms of tissue distribution, expressed in dynamic domains in the embryonic epidermis, many of which border on sites of epithelial invagination into the embryo interior, including ventral furrow, cephalic furrow, fore- and hindgut, optic lobe and tracheal pits. Later in embryogenesis, expression is seen in imaginal tissues.

The protein localises to the cell membrane. The enzyme catalyses L-tyrosyl-[protein] + ATP = O-phospho-L-tyrosyl-[protein] + ADP + H(+). Its function is as follows. May play an essential role in neuronal pathway recognition and ventral muscle attachment site selection. This is Tyrosine-protein kinase Dnt (dnt) from Drosophila melanogaster (Fruit fly).